Here is a 317-residue protein sequence, read N- to C-terminus: (2S)-3-sulfopropanediol dehydratase activating enzyme (317 aa).

In terms of domain architecture, Radical SAM core spans 18–306 (HDGPGLRTEL…QMLAEYFNQR (289 aa)). The [4Fe-4S] cluster site is built by cysteine 32, cysteine 36, cysteine 39, cysteine 58, cysteine 64, cysteine 67, cysteine 71, cysteine 92, cysteine 95, cysteine 98, and cysteine 102. An S-adenosyl-L-methionine-binding site is contributed by 38 to 40 (WCS). 4Fe-4S ferredoxin-type domains are found at residues 49-82 (AQVGVYKTKCISYKKCAACEETCPQENILQFTRG) and 83-112 (KLTSIERHDCTNCLACHNACPSDAIKLWGK). Residues glycine 142 and 191–193 (DIK) each bind S-adenosyl-L-methionine.

This sequence belongs to the organic radical-activating enzymes family. [4Fe-4S] cluster serves as cofactor.

It catalyses the reaction glycyl-[protein] + reduced [flavodoxin] + S-adenosyl-L-methionine = glycin-2-yl radical-[protein] + semiquinone [flavodoxin] + 5'-deoxyadenosine + L-methionine + H(+). It functions in the pathway organosulfur degradation; alkanesulfonate degradation. Its function is as follows. Involved in the degradation of the organosulfur compound 2(S)-dihydroxypropanesulfonate (DHPS). Catalyzes activation of the (2S)-3-sulfopropanediol dehydratase HpfG under anaerobic conditions by generation of an organic free radical on a glycine residue. The chain is (2S)-3-sulfopropanediol dehydratase activating enzyme from Klebsiella oxytoca.